Consider the following 187-residue polypeptide: Probable cobalt-precorrin-6B C(15)-methyltransferase (decarboxylating) (187 aa).

Residues T15, 39-43 (GSCTG), E60, and A89 each bind S-adenosyl-L-methionine.

The protein belongs to the methyltransferase superfamily. Archaeal-type CbiT family.

The enzyme catalyses Co-precorrin-6B + S-adenosyl-L-methionine = Co-precorrin-7 + S-adenosyl-L-homocysteine + CO2. It participates in cofactor biosynthesis; adenosylcobalamin biosynthesis; cob(II)yrinate a,c-diamide from sirohydrochlorin (anaerobic route): step 8/10. Catalyzes the methylation of C-15 in cobalt-precorrin-6B followed by the decarboxylation of C-12 to form cobalt-precorrin-7. This Halobacterium salinarum (strain ATCC 700922 / JCM 11081 / NRC-1) (Halobacterium halobium) protein is Probable cobalt-precorrin-6B C(15)-methyltransferase (decarboxylating).